We begin with the raw amino-acid sequence, 115 residues long: Guanylin (115 aa).

The signal sequence occupies residues 1–21 (MNACVLSVLCLLGAVAVLVEG). Positions 22–100 (VTVQDGDLSF…LQRLEAIAQD (79 aa)) are excised as a propeptide. Intrachain disulfides connect cysteine 69–cysteine 82, cysteine 104–cysteine 112, and cysteine 107–cysteine 115.

This sequence belongs to the guanylin family.

The protein resides in the secreted. Endogenous activator of intestinal guanylate cyclase. It stimulates this enzyme through the same receptor binding region as the heat-stable enterotoxins. The sequence is that of Guanylin (GUCA2A) from Notomys alexis (Spinifex hopping mouse).